The chain runs to 213 residues: Thymidylate kinase (213 aa).

ATP is bound at residue 10–17 (GLEGAGKT).

Belongs to the thymidylate kinase family.

It carries out the reaction dTMP + ATP = dTDP + ADP. Functionally, phosphorylation of dTMP to form dTDP in both de novo and salvage pathways of dTTP synthesis. The protein is Thymidylate kinase of Escherichia coli O157:H7 (strain EC4115 / EHEC).